Here is a 37-residue protein sequence, read N- to C-terminus: uncharacterized protein (37 aa).

The chain crosses the membrane as a helical span at residues 16-36 (FALIVVLFILLIIVGTAFVGG).

The protein belongs to the SscA family.

The protein localises to the membrane. This is an uncharacterized protein from Bacillus subtilis (strain 168).